A 435-amino-acid polypeptide reads, in one-letter code: Zinc finger CCCH domain-containing protein 67 (435 aa).

Positions 1 to 91 (MSKPEETSDP…DQKEEEEGSE (91 aa)) are disordered. C3H1-type zinc fingers lie at residues 101–129 (RPDS…HPVR), 148–176 (NPKL…HMKE), and 194–222 (RPGE…HPDP). The interval 235–274 (GNNGGSFSPKAPSQASSTSWSSTRHMNGTGTAPFIPSMFP) is disordered. Over residues 247 to 256 (SQASSTSWSS) the composition is skewed to low complexity. 2 consecutive C3H1-type zinc fingers follow at residues 334–362 (RPDQ…HPKN) and 380–408 (RPDQ…HSIP). The segment at 412-435 (SPSSSQTVEARQVGANGNEDDSWH) is disordered.

The protein localises to the nucleus. The polypeptide is Zinc finger CCCH domain-containing protein 67 (Arabidopsis thaliana (Mouse-ear cress)).